The primary structure comprises 441 residues: Chromosome partition protein MukF (441 aa).

The tract at residues 208 to 236 (LDETSGNLRELQDTLNAAGDKLQAQLLRI) is leucine-zipper.

It belongs to the MukF family. As to quaternary structure, interacts, and probably forms a ternary complex, with MukE and MukB via its C-terminal region. The complex formation is stimulated by calcium or magnesium. It is required for an interaction between MukE and MukB.

It localises to the cytoplasm. It is found in the nucleoid. In terms of biological role, involved in chromosome condensation, segregation and cell cycle progression. May participate in facilitating chromosome segregation by condensation DNA from both sides of a centrally located replisome during cell division. Not required for mini-F plasmid partitioning. Probably acts via its interaction with MukB and MukE. Overexpression results in anucleate cells. It has a calcium binding activity. This Pasteurella multocida (strain Pm70) protein is Chromosome partition protein MukF.